Reading from the N-terminus, the 299-residue chain is Ribonuclease 3-like protein 3 (299 aa).

An RNase III domain is found at 39-183; that stretch reads VAAVESLLGY…LIGAIYCDSN (145 aa). 3 residues coordinate Mg(2+): E79, D169, and E172. The 65-residue stretch at 209–273 folds into the DRBM domain; the sequence is HPVSELFEFC…AKAALDKLKE (65 aa). Residues 274-299 are disordered; sequence TLGQSQTEPMSAEVSEQFNKIDLTGS. A compositionally biased stretch (polar residues) spans 275-291; the sequence is LGQSQTEPMSAEVSEQF.

It depends on Mg(2+) as a cofactor. The cofactor is Mn(2+).

Functionally, cleaves double-stranded RNA (dsRNA). The sequence is that of Ribonuclease 3-like protein 3 from Oryza sativa subsp. japonica (Rice).